The chain runs to 237 residues: MKIELTVNGLKIQAQYQNEEIENVHKPLLHMLAALQTVNPQRRTVVFLCAPPGTGKSTLTTFWEYLAQQDPELPAIQTLPMDGFHHYNSWLDAHQLRPFKGAPETFDVAKLTENLRQVVEGDCTWPQYDRQKHDPVEDALHVTAPLVIVEGNWLLLDDEKWLELASFCDFSIFIHAPAQILRERLISRKIAGGLTRQVAEAFYARTDGPNVERVLMNSRQANLIVEMTEEGRYHFTS.

Residue 50 to 57 (APPGTGKS) coordinates ATP.

This is an uncharacterized protein from Escherichia coli (strain K12).